A 1420-amino-acid polypeptide reads, in one-letter code: DNA-directed RNA polymerase subunit beta'' (1420 aa).

Cys220, Cys295, Cys302, and Cys305 together coordinate Zn(2+).

The protein belongs to the RNA polymerase beta' chain family. RpoC2 subfamily. As to quaternary structure, in plastids the minimal PEP RNA polymerase catalytic core is composed of four subunits: alpha, beta, beta', and beta''. When a (nuclear-encoded) sigma factor is associated with the core the holoenzyme is formed, which can initiate transcription. Zn(2+) serves as cofactor.

The protein resides in the plastid. The protein localises to the chloroplast. The enzyme catalyses RNA(n) + a ribonucleoside 5'-triphosphate = RNA(n+1) + diphosphate. Its function is as follows. DNA-dependent RNA polymerase catalyzes the transcription of DNA into RNA using the four ribonucleoside triphosphates as substrates. The chain is DNA-directed RNA polymerase subunit beta'' from Adiantum capillus-veneris (Maidenhair fern).